Consider the following 599-residue polypeptide: Probable acetolactate synthase large subunit (599 aa).

Glu47 serves as a coordination point for thiamine diphosphate. Residues Arg149, 258–279 (HGTK…IGCR), and 301–320 (DIDP…IVGD) contribute to the FAD site. A thiamine pyrophosphate binding region spans residues 404 to 484 (QNQMWMAHYF…VVICIFDNRT (81 aa)). Residues Asp455 and Asn482 each contribute to the Mg(2+) site.

It belongs to the TPP enzyme family. As to quaternary structure, dimer of large and small chains. The cofactor is Mg(2+). Thiamine diphosphate is required as a cofactor.

The catalysed reaction is 2 pyruvate + H(+) = (2S)-2-acetolactate + CO2. Its pathway is amino-acid biosynthesis; L-isoleucine biosynthesis; L-isoleucine from 2-oxobutanoate: step 1/4. The protein operates within amino-acid biosynthesis; L-valine biosynthesis; L-valine from pyruvate: step 1/4. In Methanococcus aeolicus, this protein is Probable acetolactate synthase large subunit (ilvB).